The primary structure comprises 127 residues: Large ribosomal subunit protein bL20 (127 aa).

Belongs to the bacterial ribosomal protein bL20 family.

In terms of biological role, binds directly to 23S ribosomal RNA and is necessary for the in vitro assembly process of the 50S ribosomal subunit. It is not involved in the protein synthesizing functions of that subunit. This chain is Large ribosomal subunit protein bL20, found in Corynebacterium diphtheriae (strain ATCC 700971 / NCTC 13129 / Biotype gravis).